A 244-amino-acid chain; its full sequence is 1-(5-phosphoribosyl)-5-[(5-phosphoribosylamino)methylideneamino] imidazole-4-carboxamide isomerase (244 aa).

Residue D8 is the Proton acceptor of the active site. The active-site Proton donor is D129.

The protein belongs to the HisA/HisF family.

The protein resides in the cytoplasm. It carries out the reaction 1-(5-phospho-beta-D-ribosyl)-5-[(5-phospho-beta-D-ribosylamino)methylideneamino]imidazole-4-carboxamide = 5-[(5-phospho-1-deoxy-D-ribulos-1-ylimino)methylamino]-1-(5-phospho-beta-D-ribosyl)imidazole-4-carboxamide. The protein operates within amino-acid biosynthesis; L-histidine biosynthesis; L-histidine from 5-phospho-alpha-D-ribose 1-diphosphate: step 4/9. The sequence is that of 1-(5-phosphoribosyl)-5-[(5-phosphoribosylamino)methylideneamino] imidazole-4-carboxamide isomerase from Bradyrhizobium sp. (strain ORS 278).